The chain runs to 746 residues: Teichoic acid poly(glycerol phosphate) polymerase (746 aa).

CDP-glycerol is bound by residues 473-477, arginine 540, 573-574, 610-612, 652-653, and aspartate 657; these read WHGTP, PT, RMH, and SS.

It belongs to the CDP-glycerol glycerophosphotransferase family.

Its subcellular location is the cell membrane. It catalyses the reaction 4-O-[(2R)-glycerylphospho]-N-acetyl-beta-D-mannosaminyl-(1-&gt;4)-N-acetyl-alpha-D-glucosaminyl di-trans,octa-cis-undecaprenyl diphosphate + n CDP-glycerol = 4-O-{[(2R)-1-glycerylphospho](n)-(2R)-1-glycerylphospho}-N-acetyl-beta-D-mannosaminyl-(1-&gt;4)-N-acetyl-alpha-D-glucosaminyl undecaprenyl diphosphate + n CMP + n H(+). It participates in cell wall biogenesis; poly(glycerol phosphate) teichoic acid biosynthesis. Responsible for the polymerization of the main chain of the major teichoic acid by sequential transfer of glycerol phosphate units from CDP-glycerol to the disaccharide linkage unit. Synthesizes polymers of approximately 35 glycerol phosphate units in length. The polypeptide is Teichoic acid poly(glycerol phosphate) polymerase (tagF) (Bacillus subtilis (strain 168)).